We begin with the raw amino-acid sequence, 375 residues long: Peptidyl-prolyl cis-trans isomerase D (375 aa).

One can recognise a PPIase cyclophilin-type domain in the interval 7–169 (YFDITIANEP…QEVTISSAGV (163 aa)). TPR repeat units lie at residues 217–250 (AGKL…LDVH), 270–307 (LPLL…PNLS), and 312–345 (GKAL…VPGD).

This sequence belongs to the cyclophilin-type PPIase family. PPIase D subfamily.

It localises to the cytoplasm. The enzyme catalyses [protein]-peptidylproline (omega=180) = [protein]-peptidylproline (omega=0). Its function is as follows. PPIases accelerate the folding of proteins. It catalyzes the cis-trans isomerization of proline imidic peptide bonds in oligopeptides. In Cryptococcus neoformans var. neoformans serotype D (strain B-3501A) (Filobasidiella neoformans), this protein is Peptidyl-prolyl cis-trans isomerase D (CPR6).